Consider the following 512-residue polypeptide: Glutathione-binding protein GsiB (512 aa).

The N-terminal stretch at 1–26 is a signal peptide; the sequence is MTQFITHKWLAALGLASSIAAFPALA.

It belongs to the bacterial solute-binding protein 5 family. As to quaternary structure, the complex is composed of two ATP-binding proteins (GsiA), two transmembrane proteins (GsiC and GsiD) and a solute-binding protein (GsiB).

It localises to the periplasm. In terms of biological role, part of the ABC transporter complex GsiABCD involved in glutathione import. Binds glutathione. This is Glutathione-binding protein GsiB from Salmonella typhimurium (strain LT2 / SGSC1412 / ATCC 700720).